Consider the following 70-residue polypeptide: KNGDLRTPVITIFDARGCKDHANKEYTGPKAGGADDEMCVKVAMQKIAVAEDAAALVLKECLSELKARKK.

Arginine 16 contacts (2R,3E)-phycocyanobilin. Residues cysteine 18, tyrosine 26, and lysine 41 each coordinate mesobiliverdin.

Belongs to the phycoerythrin family. As to quaternary structure, heterotetramer of 2 different alpha chains and 2 identical beta chains which form 2 alpha-beta heterodimers within the heterotetramer. Post-translationally, contains one phycocyanobilin chromophore, one mesobiliverdin chromophore and one 15,16-dihydrobiliverdin chromophore with binding mediated by both the alpha and beta subunits.

The protein resides in the plastid. Its subcellular location is the chloroplast thylakoid membrane. Functionally, light-harvesting photosynthetic tetrapyrrole chromophore-protein from the phycobiliprotein complex. The sequence is that of Phycocyanin-645 alpha-2 chain from Chroomonas sp.